The sequence spans 358 residues: uncharacterized protein (358 aa).

29–36 lines the ATP pocket; that stretch reads GPINSGKT.

It belongs to the archaeal ATPase family.

This is an uncharacterized protein from Methanocaldococcus jannaschii (strain ATCC 43067 / DSM 2661 / JAL-1 / JCM 10045 / NBRC 100440) (Methanococcus jannaschii).